The primary structure comprises 30 residues: Hainantoxin F7-28.42 (30 aa).

In terms of tissue distribution, expressed by the venom gland.

It localises to the secreted. This chain is Hainantoxin F7-28.42, found in Cyriopagopus hainanus (Chinese bird spider).